Here is a 101-residue protein sequence, read N- to C-terminus: ATP synthase subunit c (101 aa).

2 helical membrane passes run 31–51 and 81–101; these read AFAYLGAGLAMIGVIGVGAGQ and AISETSSIYALLVALILIFVG.

The protein belongs to the ATPase C chain family. In terms of assembly, F-type ATPases have 2 components, F(1) - the catalytic core - and F(0) - the membrane proton channel. F(1) has five subunits: alpha(3), beta(3), gamma(1), delta(1), epsilon(1). F(0) has three main subunits: a(1), b(2) and c(10-14). The alpha and beta chains form an alternating ring which encloses part of the gamma chain. F(1) is attached to F(0) by a central stalk formed by the gamma and epsilon chains, while a peripheral stalk is formed by the delta and b chains.

It localises to the cell membrane. F(1)F(0) ATP synthase produces ATP from ADP in the presence of a proton or sodium gradient. F-type ATPases consist of two structural domains, F(1) containing the extramembraneous catalytic core and F(0) containing the membrane proton channel, linked together by a central stalk and a peripheral stalk. During catalysis, ATP synthesis in the catalytic domain of F(1) is coupled via a rotary mechanism of the central stalk subunits to proton translocation. Its function is as follows. Key component of the F(0) channel; it plays a direct role in translocation across the membrane. A homomeric c-ring of between 10-14 subunits forms the central stalk rotor element with the F(1) delta and epsilon subunits. In Mesomycoplasma hyopneumoniae (strain 7448) (Mycoplasma hyopneumoniae), this protein is ATP synthase subunit c.